Reading from the N-terminus, the 203-residue chain is Sarcosine oxidase subunit gamma (203 aa).

The protein belongs to the SoxG family. Heterotetramer composed of subunits alpha (SoxA), beta (SoxB), gamma (SoxG) and delta (SoxD).

It is found in the cytoplasm. It catalyses the reaction sarcosine + (6S)-5,6,7,8-tetrahydrofolate + O2 = (6R)-5,10-methylene-5,6,7,8-tetrahydrofolate + glycine + H2O2. The enzyme catalyses sarcosine + O2 + H2O = formaldehyde + glycine + H2O2. Its function is as follows. In the presence of tetrahydrofolate, catalyzes the oxidative demethylation of sarcosine to yield glycine, 5,10-methylenetetrahydrofolate and hydrogen peroxide. In the absence of tetrahydrofolate, catalyzes the oxidative demethylation of sarcosine to yield glycine, formaldehyde and hydrogen peroxide. The chain is Sarcosine oxidase subunit gamma from Corynebacterium sp. (strain P-1).